Consider the following 179-residue polypeptide: Peptide deformylase 2 (179 aa).

Positions 101 and 143 each coordinate Fe cation. E144 is an active-site residue. Residue H147 participates in Fe cation binding.

It belongs to the polypeptide deformylase family. It depends on Fe(2+) as a cofactor.

It catalyses the reaction N-terminal N-formyl-L-methionyl-[peptide] + H2O = N-terminal L-methionyl-[peptide] + formate. In terms of biological role, removes the formyl group from the N-terminal Met of newly synthesized proteins. Requires at least a dipeptide for an efficient rate of reaction. N-terminal L-methionine is a prerequisite for activity but the enzyme has broad specificity at other positions. The chain is Peptide deformylase 2 from Pseudomonas syringae pv. tomato (strain ATCC BAA-871 / DC3000).